Reading from the N-terminus, the 185-residue chain is Bcl-2-modifying factor (185 aa).

Residues 1–28 are disordered; it reads MEPPQCVEELEDDVFQSEDGEPGTQPGG. Residues 8–21 are compositionally biased toward acidic residues; the sequence is EELEDDVFQSEDGE. The tract at residues 67 to 75 is interaction with DLC2; sequence DKATQTLSP. The short motif at 134 to 148 is the BH3 element; the sequence is IARKLQCIADQFHRL.

Belongs to the Bcl-2 family. In terms of assembly, interacts with MCL1, BCL2, BCL2L1/BCL-Xl, BCL2A1 and BCL2L2/BCL-w. Interacts with the myosin V actin motor complex through its binding to DLC2. In terms of tissue distribution, widely expressed with an abundant expression in pancreas, liver kidney and hematopoietic tissues.

Functionally, may play a role in apoptosis. The sequence is that of Bcl-2-modifying factor (Bmf) from Mus musculus (Mouse).